The primary structure comprises 477 residues: Bifunctional protein HldE (477 aa).

The interval methionine 1 to threonine 318 is ribokinase. Asparagine 195–glutamate 198 lines the ATP pocket. Residue aspartate 264 is part of the active site. Positions methionine 344–aspartate 477 are cytidylyltransferase.

In the N-terminal section; belongs to the carbohydrate kinase PfkB family. This sequence in the C-terminal section; belongs to the cytidylyltransferase family. Homodimer.

It carries out the reaction D-glycero-beta-D-manno-heptose 7-phosphate + ATP = D-glycero-beta-D-manno-heptose 1,7-bisphosphate + ADP + H(+). The catalysed reaction is D-glycero-beta-D-manno-heptose 1-phosphate + ATP + H(+) = ADP-D-glycero-beta-D-manno-heptose + diphosphate. The protein operates within nucleotide-sugar biosynthesis; ADP-L-glycero-beta-D-manno-heptose biosynthesis; ADP-L-glycero-beta-D-manno-heptose from D-glycero-beta-D-manno-heptose 7-phosphate: step 1/4. It functions in the pathway nucleotide-sugar biosynthesis; ADP-L-glycero-beta-D-manno-heptose biosynthesis; ADP-L-glycero-beta-D-manno-heptose from D-glycero-beta-D-manno-heptose 7-phosphate: step 3/4. Its function is as follows. Catalyzes the phosphorylation of D-glycero-D-manno-heptose 7-phosphate at the C-1 position to selectively form D-glycero-beta-D-manno-heptose-1,7-bisphosphate. Functionally, catalyzes the ADP transfer from ATP to D-glycero-beta-D-manno-heptose 1-phosphate, yielding ADP-D-glycero-beta-D-manno-heptose. The protein is Bifunctional protein HldE of Edwardsiella ictaluri (strain 93-146).